Here is a 145-residue protein sequence, read N- to C-terminus: Deoxyuridine 5'-triphosphate nucleotidohydrolase (145 aa).

Residues Arg-64–Gly-66, Asn-77, Thr-81–Asp-83, and Met-91 contribute to the substrate site.

This sequence belongs to the dUTPase family. The cofactor is Mg(2+).

The enzyme catalyses dUTP + H2O = dUMP + diphosphate + H(+). It functions in the pathway pyrimidine metabolism; dUMP biosynthesis; dUMP from dCTP (dUTP route): step 2/2. In terms of biological role, this enzyme is involved in nucleotide metabolism: it produces dUMP, the immediate precursor of thymidine nucleotides and it decreases the intracellular concentration of dUTP so that uracil cannot be incorporated into DNA. The protein is Deoxyuridine 5'-triphosphate nucleotidohydrolase of Leptospira interrogans serogroup Icterohaemorrhagiae serovar copenhageni (strain Fiocruz L1-130).